We begin with the raw amino-acid sequence, 122 residues long: Cytochrome b-c1 complex subunit 7-1, mitochondrial (122 aa).

Belongs to the UQCRB/QCR7 family. Component of the ubiquinol-cytochrome c oxidoreductase (cytochrome b-c1 complex, complex III, CIII), a multisubunit enzyme composed of 10 subunits. The complex is composed of 3 respiratory subunits cytochrome b (MT-CYB), cytochrome c1 (CYC1-1 or CYC1-2) and Rieske protein (UCR1-1 or UCR1-2), 2 core protein subunits MPPalpha1 (or MPPalpha2) and MPPB, and 5 low-molecular weight protein subunits QCR7-1 (or QCR7-2), UCRQ-1 (or UCRQ-2), QCR9, UCRY and probably QCR6-1 (or QCR6-2). The complex exists as an obligatory dimer and forms supercomplexes (SCs) in the inner mitochondrial membrane with NADH-ubiquinone oxidoreductase (complex I, CI), resulting in different assemblies (supercomplexes SCI(1)III(2) and SCI(2)III(4)).

The protein resides in the mitochondrion inner membrane. Component of the ubiquinol-cytochrome c oxidoreductase, a multisubunit transmembrane complex that is part of the mitochondrial electron transport chain which drives oxidative phosphorylation. The respiratory chain contains 3 multisubunit complexes succinate dehydrogenase (complex II, CII), ubiquinol-cytochrome c oxidoreductase (cytochrome b-c1 complex, complex III, CIII) and cytochrome c oxidase (complex IV, CIV), that cooperate to transfer electrons derived from NADH and succinate to molecular oxygen, creating an electrochemical gradient over the inner membrane that drives transmembrane transport and the ATP synthase. The cytochrome b-c1 complex catalyzes electron transfer from ubiquinol to cytochrome c, linking this redox reaction to translocation of protons across the mitochondrial inner membrane, with protons being carried across the membrane as hydrogens on the quinol. In the process called Q cycle, 2 protons are consumed from the matrix, 4 protons are released into the intermembrane space and 2 electrons are passed to cytochrome c. In Arabidopsis thaliana (Mouse-ear cress), this protein is Cytochrome b-c1 complex subunit 7-1, mitochondrial (QCR7-1).